Here is a 106-residue protein sequence, read N- to C-terminus: Thiosulfate sulfurtransferase GlpE (106 aa).

Residues 17–105 (EQKQAHLVDI…WHRANLPIEA (89 aa)) form the Rhodanese domain. C65 serves as the catalytic Cysteine persulfide intermediate.

It belongs to the GlpE family.

Its subcellular location is the cytoplasm. It carries out the reaction thiosulfate + hydrogen cyanide = thiocyanate + sulfite + 2 H(+). The enzyme catalyses thiosulfate + [thioredoxin]-dithiol = [thioredoxin]-disulfide + hydrogen sulfide + sulfite + 2 H(+). Functionally, transferase that catalyzes the transfer of sulfur from thiosulfate to thiophilic acceptors such as cyanide or dithiols. May function in a CysM-independent thiosulfate assimilation pathway by catalyzing the conversion of thiosulfate to sulfite, which can then be used for L-cysteine biosynthesis. The sequence is that of Thiosulfate sulfurtransferase GlpE from Vibrio cholerae serotype O1 (strain ATCC 39541 / Classical Ogawa 395 / O395).